Here is a 609-residue protein sequence, read N- to C-terminus: UvrABC system protein C (609 aa).

The GIY-YIG domain maps to serine 16–valine 94. The UVR domain occupies glutamine 203–valine 238.

Belongs to the UvrC family. Interacts with UvrB in an incision complex.

It localises to the cytoplasm. The UvrABC repair system catalyzes the recognition and processing of DNA lesions. UvrC both incises the 5' and 3' sides of the lesion. The N-terminal half is responsible for the 3' incision and the C-terminal half is responsible for the 5' incision. The sequence is that of UvrABC system protein C from Shewanella piezotolerans (strain WP3 / JCM 13877).